The following is a 212-amino-acid chain: MKQLFRQWYDLSEIKKELTTRNWFPATSGNISIKVSHEPLTFLITASGKDKTKTTPDDFLLVDHVGVPVLETELRPSAETILHTHIYNNTNAGCVLHVHTTDNNVITNLYSDAVTLQNQEIIKALDIWEEGATIHIPIIENHAHIPTLGENFRKHIKGDSGAVLIRNHGITVWGRDSFDAKKRLEAYEFLFQFHIKLLSIQGGVSNGANSYS.

2 residues coordinate Zn(2+): histidine 97 and histidine 99.

It belongs to the aldolase class II family. MtnB subfamily. As to quaternary structure, homotetramer. Requires Zn(2+) as cofactor.

It carries out the reaction 5-(methylsulfanyl)-D-ribulose 1-phosphate = 5-methylsulfanyl-2,3-dioxopentyl phosphate + H2O. It functions in the pathway amino-acid biosynthesis; L-methionine biosynthesis via salvage pathway; L-methionine from S-methyl-5-thio-alpha-D-ribose 1-phosphate: step 2/6. Its function is as follows. Catalyzes the dehydration of methylthioribulose-1-phosphate (MTRu-1-P) into 2,3-diketo-5-methylthiopentyl-1-phosphate (DK-MTP-1-P). In Bacillus cereus (strain G9842), this protein is Methylthioribulose-1-phosphate dehydratase.